Consider the following 378-residue polypeptide: Acetylornithine deacetylase (378 aa).

His76 serves as a coordination point for Zn(2+). The active site involves Asp78. Asp108 is a Zn(2+) binding site. The active site involves Glu140. Glu141, Glu165, and His351 together coordinate Zn(2+).

The protein belongs to the peptidase M20A family. ArgE subfamily. Homodimer. Requires Zn(2+) as cofactor. It depends on Co(2+) as a cofactor. Glutathione is required as a cofactor.

The protein localises to the cytoplasm. The enzyme catalyses N(2)-acetyl-L-ornithine + H2O = L-ornithine + acetate. It participates in amino-acid biosynthesis; L-arginine biosynthesis; L-ornithine from N(2)-acetyl-L-ornithine (linear): step 1/1. Catalyzes the hydrolysis of the amide bond of N(2)-acetylated L-amino acids. Cleaves the acetyl group from N-acetyl-L-ornithine to form L-ornithine, an intermediate in L-arginine biosynthesis pathway, and a branchpoint in the synthesis of polyamines. The sequence is that of Acetylornithine deacetylase from Aliivibrio salmonicida (strain LFI1238) (Vibrio salmonicida (strain LFI1238)).